Reading from the N-terminus, the 159-residue chain is Succinate dehydrogenase [ubiquinone] cytochrome b small subunit, mitochondrial (159 aa).

The N-terminal 56 residues, 1–56, are a transit peptide targeting the mitochondrion; it reads MAVLWRLSAVCGALGGRALLLRTPVVRPAHISAFLQDRPIPEWCGVQHIHLSPSHH. Over 57-63 the chain is Mitochondrial matrix; sequence SGSKAAS. Residues 64–85 traverse the membrane as a helical segment; it reads LHWTSERVVSVLLLGLLPAAYL. Residues 86–90 lie on the Mitochondrial intermembrane side of the membrane; sequence NPCSA. A helical membrane pass occupies residues 91–111; sequence MDYSLAAALTLHGHWGLGQVV. A heme b-binding site is contributed by His102. Over 112-122 the chain is Mitochondrial matrix; the sequence is TDYVHGDALQK. An a ubiquinone-binding site is contributed by Tyr114. Residues 123–144 form a helical membrane-spanning segment; the sequence is AAKAGLLALSALTFAGLCYFNY. Residues 145–159 are Mitochondrial intermembrane-facing; it reads HDVGICKAVAMLWKL.

It belongs to the CybS family. In terms of assembly, component of complex II composed of four subunits: the flavoprotein (FP) SDHA, iron-sulfur protein (IP) SDHB, and a cytochrome b560 composed of SDHC and SDHD.

The protein resides in the mitochondrion inner membrane. The protein operates within carbohydrate metabolism; tricarboxylic acid cycle. In terms of biological role, membrane-anchoring subunit of succinate dehydrogenase (SDH) that is involved in complex II of the mitochondrial electron transport chain and is responsible for transferring electrons from succinate to ubiquinone (coenzyme Q). SDH also oxidizes malate to the non-canonical enol form of oxaloacetate, enol-oxaloacetate. Enol-oxaloacetate, which is a potent inhibitor of the succinate dehydrogenase activity, is further isomerized into keto-oxaloacetate. The polypeptide is Succinate dehydrogenase [ubiquinone] cytochrome b small subunit, mitochondrial (SDHD) (Homo sapiens (Human)).